Here is a 769-residue protein sequence, read N- to C-terminus: Protein lethal(2)denticleless (769 aa).

WD repeat units follow at residues 99-129 (CHFN…RLWE), 143-174 (GHTR…LIWD), 194-249 (GHTG…KVWD), 264-303 (RHKL…YCYN), 320-349 (NSTF…YIWN), and 362-393 (GHTV…KIWR). The interval 196–221 (TGGPGTPVSQRKQRTRTPKMAGGTTS) is disordered. Phosphothreonine is present on T201. S204 carries the post-translational modification Phosphoserine. 3 disordered regions span residues 448–467 (RLMD…TTKR), 476–562 (AGQE…HVYT), and 655–769 (SPRL…VGSD). T456 is subject to Phosphothreonine. Position 459 is a phosphoserine (S459). Positions 503–518 (PSSQETACRHIQLQSI) are enriched in polar residues. S524 carries the post-translational modification Phosphoserine. The segment covering 524 to 533 (SPSKRQKENS) has biased composition (basic and acidic residues). Over residues 546–562 (STPSHSPLSENVNHVYT) the composition is skewed to polar residues. S655 is subject to Phosphoserine. Residues 657-666 (RLQSLRQSEC) are compositionally biased toward polar residues. 3 positions are modified to phosphoserine: S679, S691, and S711. The segment covering 689 to 704 (AGSSSHSHSQSQPKTP) has biased composition (low complexity). Polar residues predominate over residues 705–714 (TSSRRNSETT). Over residues 728-743 (PAEETTTTNAAPSSSD) the composition is skewed to low complexity. Over residues 758–769 (SMRTPTTAVGSD) the composition is skewed to polar residues.

This sequence belongs to the WD repeat cdt2 family. Component of the DCX(DTL) E3 ubiquitin ligase complex, at least composed of Cul-4, pic/DDB1, l(2)dtl/CDT2 and Roc1a. Ubiquitously expressed during embryogenesis with no sign of tissue specificity in expression up to stage 17.

The protein resides in the cytoplasm. The protein operates within protein modification; protein ubiquitination. Substrate-specific adapter of a DCX (DDB1-CUL4-X-box) E3 ubiquitin-protein ligase complex required for cell cycle control. The DCX(DTL) complex, also named CRL4(CDT2) complex, mediates the polyubiquitination and subsequent degradation of E2f during S phase. E2f degradation is necessary to ensure proper development. Substrates require their interaction with PCNA for their polyubiquitination: substrates interact with PCNA via their PIP-box, leading to recruit the DCX(DTL) complex. This is Protein lethal(2)denticleless (l(2)dtl) from Drosophila melanogaster (Fruit fly).